Here is a 596-residue protein sequence, read N- to C-terminus: MRNIRNFSIIAHVDHGKSTLADRIIQLCGGLQAREMEAQVLDSNPIERERGITIKAQSVSLPYTAKDGQTYHLNFIDTPGHVDFSYEVSRSLAACEGALLVVDAAQGVEAQSVANCYTAVEQGLEVVPVLNKIDLPTADVDRAKAEIEAVIGIDAEDAVAVSAKTGLNIDLVLEAIVHRIPPPKPRETDKLQALIIDSWFDNYLGVVSLVRVMQGEIKPGSKILVMSTGRTHLVDKVGVFTPKRKELPALGAGEVGWINASIKDVHGAPVGDTLTLAGDPAPHALPGFQEMQPRVFAGLFPVDAEDYPDLREALDKLRLNDAALRFEPESSEAMGFGFRCGFLGMLHMEIVQERLEREYNLDLISTAPTVVYEVLKTDGTVINMDNPAKLPQLNLVQEIREPIIRANVLTPEEYIGNIIKLCEEKRGTQIGINYLGSQVQISYELPMAEVVLDFFDKLKSVSRGYASLDYHFVRFDAGPFVRVDVLINGDKVDALSLIVHRSHADRRGRELCEKMKDLIPRQMFDVAIQAAIGSQIISRSTVKAMRKNVLAKCYGGDVSRKKKLLEKQKEGKKRMKQVGRVEIPQEAFLAVLQMDK.

Residues 2-184 (RNIRNFSIIA…AIVHRIPPPK (183 aa)) form the tr-type G domain. GTP is bound by residues 14-19 (DHGKST) and 131-134 (NKID).

Belongs to the TRAFAC class translation factor GTPase superfamily. Classic translation factor GTPase family. LepA subfamily.

It is found in the cell inner membrane. It catalyses the reaction GTP + H2O = GDP + phosphate + H(+). Required for accurate and efficient protein synthesis under certain stress conditions. May act as a fidelity factor of the translation reaction, by catalyzing a one-codon backward translocation of tRNAs on improperly translocated ribosomes. Back-translocation proceeds from a post-translocation (POST) complex to a pre-translocation (PRE) complex, thus giving elongation factor G a second chance to translocate the tRNAs correctly. Binds to ribosomes in a GTP-dependent manner. The protein is Elongation factor 4 of Xanthomonas euvesicatoria pv. vesicatoria (strain 85-10) (Xanthomonas campestris pv. vesicatoria).